Here is a 93-residue protein sequence, read N- to C-terminus: Pyrimidine/purine nucleoside phosphorylase (93 aa).

This sequence belongs to the nucleoside phosphorylase PpnP family.

The enzyme catalyses a purine D-ribonucleoside + phosphate = a purine nucleobase + alpha-D-ribose 1-phosphate. It catalyses the reaction adenosine + phosphate = alpha-D-ribose 1-phosphate + adenine. It carries out the reaction cytidine + phosphate = cytosine + alpha-D-ribose 1-phosphate. The catalysed reaction is guanosine + phosphate = alpha-D-ribose 1-phosphate + guanine. The enzyme catalyses inosine + phosphate = alpha-D-ribose 1-phosphate + hypoxanthine. It catalyses the reaction thymidine + phosphate = 2-deoxy-alpha-D-ribose 1-phosphate + thymine. It carries out the reaction uridine + phosphate = alpha-D-ribose 1-phosphate + uracil. The catalysed reaction is xanthosine + phosphate = alpha-D-ribose 1-phosphate + xanthine. In terms of biological role, catalyzes the phosphorolysis of diverse nucleosides, yielding D-ribose 1-phosphate and the respective free bases. Can use uridine, adenosine, guanosine, cytidine, thymidine, inosine and xanthosine as substrates. Also catalyzes the reverse reactions. This is Pyrimidine/purine nucleoside phosphorylase from Pseudomonas syringae pv. syringae (strain B728a).